We begin with the raw amino-acid sequence, 273 residues long: Protein B4 (273 aa).

The segment at 1–24 (MAPKKAVAAPEGGNKENAAVKGSS) is disordered. In terms of domain architecture, H15 spans 40–118 (SHPPTLSMVV…GATGRFKLAK (79 aa)). Residues 120-273 (VKTTKAGKEN…AGKKGKKVTN (154 aa)) are disordered. The span at 154–256 (AKTEKEPKGE…KDVKAQKDST (103 aa)) shows a compositional bias: basic and acidic residues. 3 consecutive repeat copies span residues 189–198 (KEAKEVDKAN), 199–208 (KEAKEVDKAN), and 209–217 (KEAKEVDKA). Residues 189–217 (KEAKEVDKANKEAKEVDKANKEAKEVDKA) form a 3 X 10 AA tandem repeats region. Residues 264-273 (AGKKGKKVTN) are compositionally biased toward basic residues.

Belongs to the histone H1/H5 family. Interacts with nap1l1.

It localises to the nucleus. It is found in the chromosome. The sequence is that of Protein B4 (b4) from Xenopus laevis (African clawed frog).